Reading from the N-terminus, the 370-residue chain is 5-hydroxytryptamine receptor 5B (370 aa).

The interval methionine 1–proline 36 is disordered. The Extracellular portion of the chain corresponds to methionine 1–phenylalanine 48. N-linked (GlcNAc...) asparagine glycosylation occurs at asparagine 5. Residues glutamate 20 to proline 36 show a composition bias toward low complexity. The chain crosses the membrane as a helical span at residues serine 49 to valine 75. Residues threonine 76 to histidine 88 are Cytoplasmic-facing. The helical transmembrane segment at asparagine 89–serine 115 threads the bilayer. Residues alanine 116–cysteine 127 are Extracellular-facing. An intrachain disulfide couples cysteine 127 to cysteine 205. Residues histidine 128–leucine 150 traverse the membrane as a helical segment. Position 134 (aspartate 134) interacts with serotonin. The Cytoplasmic portion of the chain corresponds to aspartate 151 to serine 168. Residues arginine 169–proline 189 form a helical membrane-spanning segment. At leucine 190–proline 211 the chain is on the extracellular side. The chain crosses the membrane as a helical span at residues serine 212–tyrosine 233. At tryptophan 234–valine 300 the chain is on the cytoplasmic side. The chain crosses the membrane as a helical span at residues glycine 301 to alanine 325. Residues cysteine 326–serine 327 lie on the Extracellular side of the membrane. A helical transmembrane segment spans residues leucine 328–threonine 352. The Cytoplasmic segment spans residues alanine 353 to arginine 370.

It belongs to the G-protein coupled receptor 1 family. Expressed predominantly in the central nervous system; in the hippocampus, habenula, and the doral raphe.

The protein resides in the cell membrane. G-protein coupled receptor for 5-hydroxytryptamine (serotonin), a biogenic hormone that functions as a neurotransmitter, a hormone and a mitogen. Also functions as a receptor for ergot alkaloid derivatives and other psychoactive substances. Ligand binding causes a conformation change that triggers signaling via guanine nucleotide-binding proteins (G proteins) and modulates the activity of downstream effectors. Htr5b is coupled to G(i)/G(o) G alpha proteins and mediates inhibitory neurotransmission: signaling inhibits adenylate cyclase activity and activates a phosphatidylinositol-calcium second messenger system that regulates the release of Ca(2+) ions from intracellular stores. In Mus musculus (Mouse), this protein is 5-hydroxytryptamine receptor 5B.